The sequence spans 531 residues: Serine protease gd (531 aa).

Residues 1–19 (MRLHLAAILILCIEHVTKA) form the signal peptide. The interval 155–174 (PEEEEVRKTDDKPPSTPHIQ) is disordered. The Peptidase S1 domain occupies 246–531 (IESDSADSLP…FLDWITAFVI (286 aa)). The N-linked (GlcNAc...) asparagine glycan is linked to Asn-272. Cys-280 and Cys-296 are disulfide-bonded. Residues His-295 and Asp-350 each act as charge relay system in the active site. 2 N-linked (GlcNAc...) asparagine glycosylation sites follow: Asn-397 and Asn-445. Cys-432 and Cys-449 form a disulfide bridge. Ser-471 acts as the Charge relay system in catalysis.

Belongs to the peptidase S1 family. Proteolytically activated by the protease ndl. In terms of tissue distribution, expression begins in previtellogenic stages and is seen in germline-derived nurse cells of the germarium. Expression continues throughout oogenesis with transcripts from the nurse cells accumulating in the oocytes. Most abundant in the ovaries, the level of protein decreases from the moment of egg laying and is essentially gone by 4 hours.

Its subcellular location is the secreted. Its function is as follows. Component of the extracellular signaling pathway that establishes the dorsal-ventral pathway of the embryo. A protease cascade involving ndl, gd, snk and ea results in activation of the spz Toll receptor ligand; acts downstream of ndl but upstream of snk and ea. Activation of ea requires activation of the ndl-gd-snk protease cascade and sulfation of a vitelline membrane component by pip. Localized activation of the Toll receptor in the ventral region of the embryo defines cell identities along the dorsal-ventral continuum. The chain is Serine protease gd from Drosophila melanogaster (Fruit fly).